The following is an 85-amino-acid chain: Large ribosomal subunit protein bL31 (85 aa).

Residues 65–85 (YGMGGAGKAGEDKKAGDKADA) form a disordered region. The segment covering 73 to 85 (AGEDKKAGDKADA) has biased composition (basic and acidic residues).

Belongs to the bacterial ribosomal protein bL31 family. Type A subfamily. Part of the 50S ribosomal subunit.

Functionally, binds the 23S rRNA. The sequence is that of Large ribosomal subunit protein bL31 from Synechococcus sp. (strain WH7803).